The sequence spans 119 residues: Large ribosomal subunit protein uL22 (119 aa).

This sequence belongs to the universal ribosomal protein uL22 family. As to quaternary structure, part of the 50S ribosomal subunit.

In terms of biological role, this protein binds specifically to 23S rRNA; its binding is stimulated by other ribosomal proteins, e.g. L4, L17, and L20. It is important during the early stages of 50S assembly. It makes multiple contacts with different domains of the 23S rRNA in the assembled 50S subunit and ribosome. The globular domain of the protein is located near the polypeptide exit tunnel on the outside of the subunit, while an extended beta-hairpin is found that lines the wall of the exit tunnel in the center of the 70S ribosome. The chain is Large ribosomal subunit protein uL22 from Chlorobium phaeovibrioides (strain DSM 265 / 1930) (Prosthecochloris vibrioformis (strain DSM 265)).